We begin with the raw amino-acid sequence, 179 residues long: UPF0227 protein VP0969 (179 aa).

The protein belongs to the UPF0227 family.

The chain is UPF0227 protein VP0969 from Vibrio parahaemolyticus serotype O3:K6 (strain RIMD 2210633).